A 605-amino-acid polypeptide reads, in one-letter code: Exo-beta-1,3-glucanase (605 aa).

The disordered stretch occupies residues M1 to P23. Residues M1–A44 form the signal peptide. Substrate-binding positions include Q174, Y194–W196, Q217, W446–D449, and E480–H481. The active-site Proton donor is the E502. Y505 is a binding site for substrate.

This sequence belongs to the glycosyl hydrolase 55 family.

It is found in the secreted. The enzyme catalyses Successive hydrolysis of beta-D-glucose units from the non-reducing ends of (1-&gt;3)-beta-D-glucans, releasing alpha-glucose.. Exo-beta-1,3-glucanase that specifically hydrolyzes laminarin and laminarioligosaccharides, producing glucose and laminaribiose as end products. In Streptomyces sp. (strain SirexAA-E / ActE), this protein is Exo-beta-1,3-glucanase.